Here is a 62-residue protein sequence, read N- to C-terminus: Photosystem II reaction center X protein (62 aa).

Residues 26 to 46 (IASFFAAALLIVIPAATFLIF) traverse the membrane as a helical segment.

This sequence belongs to the PsbX family. Type 2 subfamily. As to quaternary structure, PSII consists of a core antenna complex that captures photons, and an electron transfer chain that converts photonic excitation into a charge separation. PSII forms dimeric complexes.

The protein localises to the cellular thylakoid membrane. In terms of biological role, involved in the binding and/or turnover of quinones at the Q(B) site of Photosystem II. The chain is Photosystem II reaction center X protein from Prochlorococcus marinus (strain MIT 9515).